Here is a 363-residue protein sequence, read N- to C-terminus: 3-isopropylmalate dehydrogenase (363 aa).

78-91 (GPKWENLPPESQPE) serves as a coordination point for NAD(+). The substrate site is built by arginine 99, arginine 109, arginine 138, and aspartate 227. Residues aspartate 227, aspartate 251, and aspartate 255 each coordinate Mg(2+). Residue 285–297 (GSAPDIAGKNIAN) participates in NAD(+) binding.

Belongs to the isocitrate and isopropylmalate dehydrogenases family. LeuB type 1 subfamily. In terms of assembly, homodimer. The cofactor is Mg(2+). Requires Mn(2+) as cofactor.

The protein localises to the cytoplasm. The enzyme catalyses (2R,3S)-3-isopropylmalate + NAD(+) = 4-methyl-2-oxopentanoate + CO2 + NADH. Its pathway is amino-acid biosynthesis; L-leucine biosynthesis; L-leucine from 3-methyl-2-oxobutanoate: step 3/4. In terms of biological role, catalyzes the oxidation of 3-carboxy-2-hydroxy-4-methylpentanoate (3-isopropylmalate) to 3-carboxy-4-methyl-2-oxopentanoate. The product decarboxylates to 4-methyl-2 oxopentanoate. This chain is 3-isopropylmalate dehydrogenase, found in Salmonella choleraesuis (strain SC-B67).